Here is a 295-residue protein sequence, read N- to C-terminus: Pyridoxal 5'-phosphate synthase subunit PdxS (295 aa).

Asp25 serves as a coordination point for D-ribose 5-phosphate. Residue Lys82 is the Schiff-base intermediate with D-ribose 5-phosphate of the active site. Gly154 is a binding site for D-ribose 5-phosphate. Residue Arg166 participates in D-glyceraldehyde 3-phosphate binding. D-ribose 5-phosphate is bound by residues Gly215 and Gly236–Ser237.

Belongs to the PdxS/SNZ family. In terms of assembly, in the presence of PdxT, forms a dodecamer of heterodimers.

It carries out the reaction aldehydo-D-ribose 5-phosphate + D-glyceraldehyde 3-phosphate + L-glutamine = pyridoxal 5'-phosphate + L-glutamate + phosphate + 3 H2O + H(+). It participates in cofactor biosynthesis; pyridoxal 5'-phosphate biosynthesis. Functionally, catalyzes the formation of pyridoxal 5'-phosphate from ribose 5-phosphate (RBP), glyceraldehyde 3-phosphate (G3P) and ammonia. The ammonia is provided by the PdxT subunit. Can also use ribulose 5-phosphate and dihydroxyacetone phosphate as substrates, resulting from enzyme-catalyzed isomerization of RBP and G3P, respectively. This chain is Pyridoxal 5'-phosphate synthase subunit PdxS, found in Actinobacillus pleuropneumoniae serotype 3 (strain JL03).